The following is a 343-amino-acid chain: Anthranilate phosphoribosyltransferase (343 aa).

5-phospho-alpha-D-ribose 1-diphosphate-binding positions include Gly-84, 87-88 (GD), Thr-92, 94-97 (NIST), 112-120 (KHGNRGVSS), and Ser-124. Gly-84 is an anthranilate binding site. Ser-96 is a binding site for Mg(2+). Position 115 (Asn-115) interacts with anthranilate. Arg-170 contacts anthranilate. Residues Asp-229 and Glu-230 each contribute to the Mg(2+) site.

This sequence belongs to the anthranilate phosphoribosyltransferase family. Homodimer. Requires Mg(2+) as cofactor.

The enzyme catalyses N-(5-phospho-beta-D-ribosyl)anthranilate + diphosphate = 5-phospho-alpha-D-ribose 1-diphosphate + anthranilate. It functions in the pathway amino-acid biosynthesis; L-tryptophan biosynthesis; L-tryptophan from chorismate: step 2/5. In terms of biological role, catalyzes the transfer of the phosphoribosyl group of 5-phosphorylribose-1-pyrophosphate (PRPP) to anthranilate to yield N-(5'-phosphoribosyl)-anthranilate (PRA). This Burkholderia vietnamiensis (strain G4 / LMG 22486) (Burkholderia cepacia (strain R1808)) protein is Anthranilate phosphoribosyltransferase.